A 334-amino-acid chain; its full sequence is Holliday junction branch migration complex subunit RuvB (334 aa).

A large ATPase domain (RuvB-L) region spans residues 1–181 (MHDRLISGTE…FGIVQRLEFY (181 aa)). Residues Ile-20, Arg-21, Gly-62, Lys-65, Thr-66, Thr-67, 128–130 (EDY), Arg-171, Tyr-181, and Arg-218 contribute to the ATP site. Thr-66 contributes to the Mg(2+) binding site. Residues 182–252 (SVEDLTHIVT…MAQRALDMLN (71 aa)) form a small ATPAse domain (RuvB-S) region. Residues 255 to 334 (KDGLDTLDRR…FGLTPPEPKN (80 aa)) form a head domain (RuvB-H) region. The DNA site is built by Arg-310 and Arg-315.

This sequence belongs to the RuvB family. Homohexamer. Forms an RuvA(8)-RuvB(12)-Holliday junction (HJ) complex. HJ DNA is sandwiched between 2 RuvA tetramers; dsDNA enters through RuvA and exits via RuvB. An RuvB hexamer assembles on each DNA strand where it exits the tetramer. Each RuvB hexamer is contacted by two RuvA subunits (via domain III) on 2 adjacent RuvB subunits; this complex drives branch migration. In the full resolvosome a probable DNA-RuvA(4)-RuvB(12)-RuvC(2) complex forms which resolves the HJ.

The protein localises to the cytoplasm. The catalysed reaction is ATP + H2O = ADP + phosphate + H(+). In terms of biological role, the RuvA-RuvB-RuvC complex processes Holliday junction (HJ) DNA during genetic recombination and DNA repair, while the RuvA-RuvB complex plays an important role in the rescue of blocked DNA replication forks via replication fork reversal (RFR). RuvA specifically binds to HJ cruciform DNA, conferring on it an open structure. The RuvB hexamer acts as an ATP-dependent pump, pulling dsDNA into and through the RuvAB complex. RuvB forms 2 homohexamers on either side of HJ DNA bound by 1 or 2 RuvA tetramers; 4 subunits per hexamer contact DNA at a time. Coordinated motions by a converter formed by DNA-disengaged RuvB subunits stimulates ATP hydrolysis and nucleotide exchange. Immobilization of the converter enables RuvB to convert the ATP-contained energy into a lever motion, pulling 2 nucleotides of DNA out of the RuvA tetramer per ATP hydrolyzed, thus driving DNA branch migration. The RuvB motors rotate together with the DNA substrate, which together with the progressing nucleotide cycle form the mechanistic basis for DNA recombination by continuous HJ branch migration. Branch migration allows RuvC to scan DNA until it finds its consensus sequence, where it cleaves and resolves cruciform DNA. The sequence is that of Holliday junction branch migration complex subunit RuvB from Acinetobacter baylyi (strain ATCC 33305 / BD413 / ADP1).